Reading from the N-terminus, the 183-residue chain is Translation initiation factor IF-3 (183 aa).

This sequence belongs to the IF-3 family. In terms of assembly, monomer.

Its subcellular location is the cytoplasm. IF-3 binds to the 30S ribosomal subunit and shifts the equilibrium between 70S ribosomes and their 50S and 30S subunits in favor of the free subunits, thus enhancing the availability of 30S subunits on which protein synthesis initiation begins. The protein is Translation initiation factor IF-3 of Pseudomonas aeruginosa (strain ATCC 15692 / DSM 22644 / CIP 104116 / JCM 14847 / LMG 12228 / 1C / PRS 101 / PAO1).